Consider the following 677-residue polypeptide: WD repeat-containing protein 48 (677 aa).

8 WD repeats span residues 28–67 (YNRN…QDPY), 73–112 (HHTD…CMST), 115–154 (THKD…ALTA), 166–205 (GNKD…KLMK), 208–247 (GHTD…CIAT), 250–289 (VHDE…MRVL), 292–334 (EEKA…NFRA), and 358–397 (KGGT…KGED). The tract at residues 611 to 632 (SQATSSSANDKPGEQEKEEDVS) is disordered.

The protein belongs to the WD repeat WDR48 family.

It is found in the nucleus. Its subcellular location is the cytoplasm. The protein resides in the lysosome. The protein localises to the late endosome. Functionally, regulator of deubiquitinating complexes, which acts as a strong activator of usp1, usp12 and usp46. Enhances the usp1-mediated deubiquitination of fancd2; usp1 being almost inactive by itself. Activates deubiquitination by increasing the catalytic turnover without increasing the affinity of deubiquitinating enzymes for the substrate. Also activates deubiquitinating activity of complexes containing usp12. Together with rad51ap1, promotes DNA repair by stimulating rad51-mediated homologous recombination. Binds single-stranded DNA (ssDNA) and double-stranded DNA (dsDNA). DNA-binding is required both for usp1-mediated deubiquitination of fancd2 and stimulation of rad51-mediated homologous recombination: both wdr48/uaf1 and rad51ap1 have coordinated role in DNA-binding during these processes. Together with atad5 and by regulating usp1 activity, has a role in pcna-mediated translesion synthesis (TLS) by deubiquitinating monoubiquitinated pcna. Together with atad5, has a role in recruiting rad51 to stalled forks during replication stress. The chain is WD repeat-containing protein 48 (wdr48) from Danio rerio (Zebrafish).